The chain runs to 609 residues: Glutamine--fructose-6-phosphate aminotransferase [isomerizing] (609 aa).

Catalysis depends on Cys-2, which acts as the Nucleophile; for GATase activity. The Glutamine amidotransferase type-2 domain maps to Cys-2–Asp-217. 2 SIS domains span residues Ala-285–Ala-425 and Trp-458–Pro-599. The For Fru-6P isomerization activity role is filled by Lys-604.

As to quaternary structure, homodimer.

It localises to the cytoplasm. The catalysed reaction is D-fructose 6-phosphate + L-glutamine = D-glucosamine 6-phosphate + L-glutamate. Catalyzes the first step in hexosamine metabolism, converting fructose-6P into glucosamine-6P using glutamine as a nitrogen source. The protein is Glutamine--fructose-6-phosphate aminotransferase [isomerizing] of Xylella fastidiosa (strain 9a5c).